A 39-amino-acid polypeptide reads, in one-letter code: Potassium channel toxin alpha-KTx 2.9 (39 aa).

3 disulfide bridges follow: C7-C29, C13-C34, and C17-C36. N39 bears the Asparagine amide mark.

The protein belongs to the short scorpion toxin superfamily. Potassium channel inhibitor family. Alpha-KTx 02 subfamily. In terms of tissue distribution, expressed by the venom gland.

It is found in the secreted. In terms of biological role, blocks Kv1.3/KCNA3 voltage-gated potassium channels of human T-lymphocytes (Kd=0.25 nM). The chain is Potassium channel toxin alpha-KTx 2.9 from Centruroides elegans (Bark scorpion).